The chain runs to 274 residues: DegV domain-containing protein Cgl2349/cg2579 (274 aa).

One can recognise a DegV domain in the interval 3–259; that stretch reads VRVIVDSSAC…PGAVSVSAVF (257 aa). Thr-39 and Ser-73 together coordinate hexadecanoate.

In terms of assembly, monomer.

Its function is as follows. Binds long-chain fatty acids, such as palmitate, and may play a role in lipid transport or fatty acid metabolism. The sequence is that of DegV domain-containing protein Cgl2349/cg2579 from Corynebacterium glutamicum (strain ATCC 13032 / DSM 20300 / JCM 1318 / BCRC 11384 / CCUG 27702 / LMG 3730 / NBRC 12168 / NCIMB 10025 / NRRL B-2784 / 534).